We begin with the raw amino-acid sequence, 818 residues long: Actin filament-associated protein 1-like 2 (818 aa).

At tyrosine 56 the chain carries Phosphotyrosine. The disordered stretch occupies residues glutamine 66–tryptophan 163. The span at glutamate 85–glutamine 94 shows a compositional bias: polar residues. Acidic residues predominate over residues tyrosine 123–glutamate 139. PH domains lie at aspartate 175–glycine 271 and serine 353–glycine 447. Position 408 is a phosphoserine (serine 408). Tyrosine 413 is modified (phosphotyrosine). The residue at position 484 (serine 484) is a Phosphoserine. The segment at alanine 513–glutamate 532 is disordered. Positions alanine 652–alanine 749 form a coiled coil. The disordered stretch occupies residues asparagine 765–alanine 787.

In terms of assembly, interacts with SRC. Interacts with LCK when tyrosine phosphorylated. Post-translationally, tyrosine phosphorylated (by SRC). Detected in spleen and thyroid, and at lower levels in kidney, brain, lung and pancreas.

It is found in the cytoplasm. May play a role in a signaling cascade by enhancing the kinase activity of SRC. Contributes to SRC-regulated transcription activation. This Homo sapiens (Human) protein is Actin filament-associated protein 1-like 2 (AFAP1L2).